The primary structure comprises 268 residues: MALVVKGKVNINEFIDLTKMEKILPSMFTPVKSVMCSKVDKIMVHENESLSEVNLLKGVKLIDSGYVCLAGLVVTGEWNLPDNCRGGVSVCLVDKRMERADEATLGSYYTAAAKKRFQFKVVPNYAITTQDAMKNVWQVLVNIRNVKMSAGFCPLSLEFVSVCIVYRNNIKLGLREKITNVRDGGPMELTEEVVDEFMEDVPMSIRLAKFRSRTGKKSDVRKGKNSSSVRSVPNKNYRNVKDFGGMSFKKNNLIDDDSEATVAESDSF.

The interval Lys216–Arg238 is disordered. The segment covering Asn225–Tyr237 has biased composition (polar residues).

This sequence belongs to the tobamovirus movement protein family. In terms of assembly, binds to host RBCS at the plasmodesmata; this interaction seems required for viral systemic movement. In resistant plants, interacts with host MBP2C at host microtubules; this interaction prevents virus cell to cell movement. In resistant plants, interacts with host resistance (R) protein (e.g. tomato ToMV resistance protein TM-2(2), AC Q71BG9) at the host plasma membrane; this interaction triggers host defense responses leading to programmed cell death.

It localises to the host cytoplasm. It is found in the host cytoskeleton. The protein resides in the host cell junction. Its subcellular location is the host plasmodesma. Functionally, transports viral genome to neighboring plant cells directly through plasmosdesmata, without any budding. The movement protein allows efficient cell to cell propagation, by bypassing the host cell wall barrier. Forms a ribonucleoprotein complex with viral RNA. Binds microtubules and modulates microtubule stability. Can bind double-stranded DNA. Triggers host hypersensitive defense reaction in incompatible plants harboring resistance (R) proteins. This chain is Movement protein (MP), found in Nicotiana tabacum (Common tobacco).